A 589-amino-acid polypeptide reads, in one-letter code: Netrin-G2 (589 aa).

The signal sequence occupies residues 1–17 (MLRLLALFLHCLPLVSG). 3 cysteine pairs are disulfide-bonded: Cys-22–Cys-39, Cys-61–Cys-81, and Cys-69–Cys-77. Positions 35–286 (EFYACQPKVM…AISNIEVIGR (252 aa)) constitute a Laminin N-terminal domain. An NGL discriminant loop I region spans residues 69–88 (CSHENPYLCSNECDASNPDL). Asn-122 and Asn-128 each carry an N-linked (GlcNAc...) asparagine glycan. Residues Cys-171 and Cys-195 are joined by a disulfide bond. The segment at 201-203 (RWA) is NGL discriminant loop II. The interval 264–267 (TYVQ) is NGL discriminant loop III. 15 disulfides stabilise this stretch: Cys-287-Cys-296, Cys-289-Cys-305, Cys-307-Cys-316, Cys-319-Cys-344, Cys-413-Cys-422, Cys-415-Cys-433, Cys-436-Cys-445, Cys-448-Cys-466, Cys-469-Cys-481, Cys-471-Cys-487, Cys-489-Cys-498, Cys-501-Cys-511, Cys-516-Cys-529, Cys-523-Cys-535, and Cys-537-Cys-546. 3 Laminin EGF-like domains span residues 287 to 346 (CKCN…ACAA), 413 to 468 (CECY…VCIE), and 469 to 513 (CNCN…GCYP). Residue Asn-310 is glycosylated (N-linked (GlcNAc...) asparagine). The N-linked (GlcNAc...) asparagine glycan is linked to Asn-455. Residue Asn-482 is glycosylated (N-linked (GlcNAc...) asparagine). Gly-566 is lipidated: GPI-anchor amidated glycine. The propeptide at 567–589 (IVPRPDTLLGCLLLLGLAARLAC) is removed in mature form.

Interacts with LRRC4. Post-translationally, N-glycosylated. As to expression, expression is restricted primarily to neurons of the CNS, particularly in the cerebral cortex, habenular nucleus and superior colliculus. Low levels in lung, kidney, heart and spleen.

The protein localises to the cell membrane. Involved in controlling patterning and neuronal circuit formation at the laminar, cellular, subcellular and synaptic levels. Promotes neurite outgrowth of both axons and dendrites. This Mus musculus (Mouse) protein is Netrin-G2 (Ntng2).